The chain runs to 859 residues: DNA mismatch repair protein MutS (859 aa).

618–625 serves as a coordination point for ATP; that stretch reads GPNMGGKS.

The protein belongs to the DNA mismatch repair MutS family.

This protein is involved in the repair of mismatches in DNA. It is possible that it carries out the mismatch recognition step. This protein has a weak ATPase activity. This chain is DNA mismatch repair protein MutS, found in Shewanella halifaxensis (strain HAW-EB4).